The primary structure comprises 397 residues: Cytochrome b (397 aa).

Helical transmembrane passes span 38–58 (FGSL…FLAM), 82–104 (WLLR…LHIF), 119–139 (VWCL…IGYV), and 185–205 (FFSL…LHLA). Histidine 88 and histidine 102 together coordinate heme b. Positions 189 and 203 each coordinate heme b. Histidine 208 is an a ubiquinone binding site. A run of 4 helical transmembrane segments spans residues 231–251 (FYVK…IWIF), 295–315 (AGGV…PFFK), 327–347 (IYQG…WIGC), and 354–373 (FVTI…AITP).

It belongs to the cytochrome b family. In terms of assembly, the main subunits of complex b-c1 are: cytochrome b, cytochrome c1 and the Rieske protein. It depends on heme b as a cofactor.

It localises to the mitochondrion inner membrane. Its function is as follows. Component of the ubiquinol-cytochrome c reductase complex (complex III or cytochrome b-c1 complex) that is part of the mitochondrial respiratory chain. The b-c1 complex mediates electron transfer from ubiquinol to cytochrome c. Contributes to the generation of a proton gradient across the mitochondrial membrane that is then used for ATP synthesis. The protein is Cytochrome b (MT-CYB) of Oryza sativa subsp. indica (Rice).